The following is a 516-amino-acid chain: Probable D,D-dipeptide-binding periplasmic protein DdpA (516 aa).

A signal peptide spans 1 to 25 (MKRSISFRPTLLALVLATNFPVAHA).

Belongs to the bacterial solute-binding protein 5 family. The complex is composed of two ATP-binding proteins (DdpD and DdpF), two transmembrane proteins (DdpB and DdpC) and a solute-binding protein (DdpA).

The protein localises to the periplasm. Functionally, part of the ABC transporter complex DdpABCDF, which is probably involved in D,D-dipeptide transport. This chain is Probable D,D-dipeptide-binding periplasmic protein DdpA (ddpA), found in Escherichia coli (strain K12).